Reading from the N-terminus, the 288-residue chain is 2-hydroxy-6-oxononadienedioate/2-hydroxy-6-oxononatrienedioate hydrolase (288 aa).

The 236-residue stretch at 39–274 folds into the AB hydrolase-1 domain; that stretch reads LVLLHGSGPG…RCGHWAQWEH (236 aa). Catalysis depends on His268, which acts as the Proton acceptor.

The protein belongs to the AB hydrolase superfamily. MhpC family. Homodimer.

The catalysed reaction is (2Z,4E)-2-hydroxy-6-oxonona-2,4-dienedioate + H2O = (2Z)-2-hydroxypenta-2,4-dienoate + succinate + H(+). It carries out the reaction (2Z,4E,7E)-2-hydroxy-6-oxonona-2,4,7-trienedioate + H2O = (2Z)-2-hydroxypenta-2,4-dienoate + fumarate + H(+). Its pathway is aromatic compound metabolism; 3-phenylpropanoate degradation. Its function is as follows. Catalyzes the cleavage of the C5-C6 bond of 2-hydroxy-6-oxononadienedioate and 2-hydroxy-6-oxononatrienedioate, a dienol ring fission product of the bacterial meta-cleavage pathway for degradation of phenylpropionic acid. This chain is 2-hydroxy-6-oxononadienedioate/2-hydroxy-6-oxononatrienedioate hydrolase, found in Paraburkholderia phymatum (strain DSM 17167 / CIP 108236 / LMG 21445 / STM815) (Burkholderia phymatum).